The following is a 329-amino-acid chain: tRNA uridine(34) hydroxylase (329 aa).

The Rhodanese domain occupies 123-217; the sequence is SDPDVILVDT…YLEEVPEEES (95 aa). Cys-177 functions as the Cysteine persulfide intermediate in the catalytic mechanism. A disordered region spans residues 285-329; that stretch reads REKQVQLSNARGETHVGGDAAHLIDQRKKEKLAHKEQQRSGKKAK. Positions 296-323 are enriched in basic and acidic residues; sequence GETHVGGDAAHLIDQRKKEKLAHKEQQR.

It belongs to the TrhO family.

The enzyme catalyses uridine(34) in tRNA + AH2 + O2 = 5-hydroxyuridine(34) in tRNA + A + H2O. In terms of biological role, catalyzes oxygen-dependent 5-hydroxyuridine (ho5U) modification at position 34 in tRNAs. In Vibrio atlanticus (strain LGP32) (Vibrio splendidus (strain Mel32)), this protein is tRNA uridine(34) hydroxylase.